A 410-amino-acid polypeptide reads, in one-letter code: Multifunctional CCA protein (410 aa).

Positions 8 and 11 each coordinate ATP. CTP is bound by residues Gly8 and Arg11. Mg(2+)-binding residues include Glu21 and Asp23. Residues Arg91, Arg137, and Arg140 each coordinate ATP. 3 residues coordinate CTP: Arg91, Arg137, and Arg140. The 102-residue stretch at Thr228–Phe329 folds into the HD domain.

The protein belongs to the tRNA nucleotidyltransferase/poly(A) polymerase family. Bacterial CCA-adding enzyme type 1 subfamily. As to quaternary structure, monomer. Can also form homodimers and oligomers. It depends on Mg(2+) as a cofactor. The cofactor is Ni(2+).

It carries out the reaction a tRNA precursor + 2 CTP + ATP = a tRNA with a 3' CCA end + 3 diphosphate. It catalyses the reaction a tRNA with a 3' CCA end + 2 CTP + ATP = a tRNA with a 3' CCACCA end + 3 diphosphate. In terms of biological role, catalyzes the addition and repair of the essential 3'-terminal CCA sequence in tRNAs without using a nucleic acid template. Adds these three nucleotides in the order of C, C, and A to the tRNA nucleotide-73, using CTP and ATP as substrates and producing inorganic pyrophosphate. tRNA 3'-terminal CCA addition is required both for tRNA processing and repair. Also involved in tRNA surveillance by mediating tandem CCA addition to generate a CCACCA at the 3' terminus of unstable tRNAs. While stable tRNAs receive only 3'-terminal CCA, unstable tRNAs are marked with CCACCA and rapidly degraded. This is Multifunctional CCA protein from Legionella pneumophila (strain Paris).